The primary structure comprises 287 residues: Protease HtpX (287 aa).

The next 2 helical transmembrane spans lie at 4 to 24 (IFLLIATNMAILLVASIVMSI) and 33 to 53 (GGLLVFAAIFGFGGAFISLAI). His-139 serves as a coordination point for Zn(2+). Glu-140 is a catalytic residue. His-143 serves as a coordination point for Zn(2+). 2 helical membrane passes run 154–174 (LIQGVVNTFVIFAARVVAGII) and 195–215 (AVVFVLDMLFGILASIIVAYF). A Zn(2+)-binding site is contributed by Glu-220.

The protein belongs to the peptidase M48B family. Zn(2+) serves as cofactor.

Its subcellular location is the cell inner membrane. The sequence is that of Protease HtpX from Shewanella halifaxensis (strain HAW-EB4).